A 140-amino-acid chain; its full sequence is uncharacterized protein (140 aa).

Helical transmembrane passes span 4–21 and 26–48; these read ILKFGILGFGAIFGYLFG and LVKVLVCFIVADYISGLLASGYL.

The protein belongs to the bacteriophage holin family. Cp-1 holin subfamily.

The protein resides in the cell membrane. This is an uncharacterized protein from Listeria monocytogenes serovar 1/2a (strain ATCC BAA-679 / EGD-e).